Here is a 59-residue protein sequence, read N- to C-terminus: MAKTIKITQTRSSIGRLPKHKATLLGLGLRRINHTVEREDTPAVRGMVNAISYMVKVEE.

This sequence belongs to the universal ribosomal protein uL30 family. Part of the 50S ribosomal subunit.

The chain is Large ribosomal subunit protein uL30 from Erwinia tasmaniensis (strain DSM 17950 / CFBP 7177 / CIP 109463 / NCPPB 4357 / Et1/99).